The primary structure comprises 200 residues: ATP-dependent Clp protease proteolytic subunit 2 (200 aa).

The active-site Nucleophile is Ser96. His121 is a catalytic residue.

It belongs to the peptidase S14 family. Fourteen ClpP subunits assemble into 2 heptameric rings which stack back to back to give a disk-like structure with a central cavity, resembling the structure of eukaryotic proteasomes.

It is found in the cytoplasm. It catalyses the reaction Hydrolysis of proteins to small peptides in the presence of ATP and magnesium. alpha-casein is the usual test substrate. In the absence of ATP, only oligopeptides shorter than five residues are hydrolyzed (such as succinyl-Leu-Tyr-|-NHMec, and Leu-Tyr-Leu-|-Tyr-Trp, in which cleavage of the -Tyr-|-Leu- and -Tyr-|-Trp bonds also occurs).. Functionally, cleaves peptides in various proteins in a process that requires ATP hydrolysis. Has a chymotrypsin-like activity. Plays a major role in the degradation of misfolded proteins. This Synechococcus sp. (strain JA-2-3B'a(2-13)) (Cyanobacteria bacterium Yellowstone B-Prime) protein is ATP-dependent Clp protease proteolytic subunit 2.